Reading from the N-terminus, the 85-residue chain is UPF0434 protein HNE_3545 (85 aa).

This sequence belongs to the UPF0434 family.

This Hyphomonas neptunium (strain ATCC 15444) protein is UPF0434 protein HNE_3545.